The sequence spans 551 residues: Glucans biosynthesis protein D (551 aa).

The tat-type signal signal peptide spans 1–32 (MNRRRFLQGSLAMAALSGTTGLSTLFSRAAFA).

The protein belongs to the OpgD/OpgG family. In terms of processing, predicted to be exported by the Tat system. The position of the signal peptide cleavage has not been experimentally proven.

It localises to the periplasm. The protein operates within glycan metabolism; osmoregulated periplasmic glucan (OPG) biosynthesis. In terms of biological role, probably involved in the control of the structural glucose backbone of osmoregulated periplasmic glucans (OPGs). The chain is Glucans biosynthesis protein D from Enterobacter sp. (strain 638).